A 523-amino-acid polypeptide reads, in one-letter code: Succinate-semialdehyde dehydrogenase, mitochondrial (523 aa).

Residues 1–35 (MATCFLLRNFCAARPALRPPGRLLREPAGAQRRSY) constitute a mitochondrion transit peptide. Lys-114 bears the N6-acetyllysine; alternate mark. The residue at position 114 (Lys-114) is an N6-succinyllysine; alternate. N6-succinyllysine occurs at positions 123 and 172. Residues Arg-201 and 216-219 (KPAE) each bind NAD(+). Arg-201 provides a ligand contact to substrate. Lys-253 carries the N6-acetyllysine; alternate modification. An N6-succinyllysine; alternate modification is found at Lys-253. 272–277 (GSTATG) is an NAD(+) binding site. The active-site Proton acceptor is the Glu-294. Arg-322 contacts substrate. The Nucleophile role is filled by Cys-328. Cysteines 328 and 330 form a disulfide. At Lys-353 the chain carries N6-acetyllysine. The residue at position 390 (Lys-390) is an N6-succinyllysine. Lys-399 is modified (N6-acetyllysine). Ser-486 contacts substrate. The residue at position 487 (Ser-487) is a Phosphoserine.

The protein belongs to the aldehyde dehydrogenase family. Homotetramer. Brain, pancreas, heart, liver, skeletal muscle, kidney. Lower in spleen, lung, kidney and testis.

It is found in the mitochondrion. The catalysed reaction is succinate semialdehyde + NAD(+) + H2O = succinate + NADH + 2 H(+). The protein operates within amino-acid degradation; 4-aminobutanoate degradation. Its activity is regulated as follows. Redox-regulated. Inhibited under oxydizing conditions. Catalyzes one step in the degradation of the inhibitory neurotransmitter gamma-aminobutyric acid (GABA). This Rattus norvegicus (Rat) protein is Succinate-semialdehyde dehydrogenase, mitochondrial (Aldh5a1).